A 177-amino-acid polypeptide reads, in one-letter code: Ribosome maturation factor RimP (177 aa).

It belongs to the RimP family.

Its subcellular location is the cytoplasm. Required for maturation of 30S ribosomal subunits. The protein is Ribosome maturation factor RimP of Streptococcus sanguinis (strain SK36).